We begin with the raw amino-acid sequence, 493 residues long: Galactose-1-phosphate uridylyltransferase (493 aa).

This sequence belongs to the galactose-1-phosphate uridylyltransferase type 2 family.

It localises to the cytoplasm. The enzyme catalyses alpha-D-galactose 1-phosphate + UDP-alpha-D-glucose = alpha-D-glucose 1-phosphate + UDP-alpha-D-galactose. It participates in carbohydrate metabolism; galactose metabolism. In Streptococcus pneumoniae (strain CGSP14), this protein is Galactose-1-phosphate uridylyltransferase.